Consider the following 641-residue polypeptide: Probable potassium transport system protein Kup (641 aa).

Residues 1–14 show a composition bias toward polar residues; that stretch reads MALDSESSASNRQG. The tract at residues 1–20 is disordered; the sequence is MALDSESSASNRQGSRNEQD. 12 helical membrane passes run 29-49, 69-89, 120-140, 156-176, 188-208, 236-256, 267-287, 307-327, 355-375, 384-404, 410-430, and 437-457; these read LCLT…LYAF, ILSL…LLII, VLIV…MITP, PQLT…LFMV, FGPI…NGII, VLGG…DMGH, FALV…LLLL, LVGL…SGVF, VYVP…VLHF, AFGI…FFVM, WNIL…LAFF, and ITDG…LMIT.

It belongs to the HAK/KUP transporter (TC 2.A.72) family.

The protein localises to the cell inner membrane. It catalyses the reaction K(+)(in) + H(+)(in) = K(+)(out) + H(+)(out). In terms of biological role, transport of potassium into the cell. Likely operates as a K(+):H(+) symporter. The chain is Probable potassium transport system protein Kup from Nitrosomonas eutropha (strain DSM 101675 / C91 / Nm57).